The sequence spans 505 residues: Trans-cinnamate 4-monooxygenase (505 aa).

A helical membrane pass occupies residues 3–23 (LLLLEKTLLGSFVAVLVAILV). Residues 213-218 (RSRLAQ) and A306 contribute to the (E)-cinnamate site. Heme is bound at residue C447.

Belongs to the cytochrome P450 family. Heme serves as cofactor.

The protein localises to the membrane. It catalyses the reaction (E)-cinnamate + reduced [NADPH--hemoprotein reductase] + O2 = (E)-4-coumarate + oxidized [NADPH--hemoprotein reductase] + H2O + H(+). It participates in phenylpropanoid metabolism; trans-4-coumarate biosynthesis; trans-4-coumarate from trans-cinnamate: step 1/1. In terms of biological role, catalyzes the first oxidative step of the phenylpropanoid pathway in higher plants by transforming trans-cinnamate into p-coumarate. The compounds formed by this pathway are essential components for lignification, pollination, and defense against ultraviolet light, predators and pathogens. The polypeptide is Trans-cinnamate 4-monooxygenase (CYP73A16) (Populus kitakamiensis (Aspen)).